Here is a 65-residue protein sequence, read N- to C-terminus: uncharacterized protein (65 aa).

Positions 1-22 (MKFIKLFTFLVYLFVTLTNVFA) are cleaved as a signal peptide.

This is an uncharacterized protein from Invertebrate iridescent virus 6 (IIV-6).